Here is a 680-residue protein sequence, read N- to C-terminus: DNA-directed RNA polymerase subunit beta' (680 aa).

Zn(2+)-binding residues include Cys69, Cys71, Cys87, and Cys90. Residues Asp489, Asp491, and Asp493 each coordinate Mg(2+).

Belongs to the RNA polymerase beta' chain family. RpoC1 subfamily. In terms of assembly, in plastids the minimal PEP RNA polymerase catalytic core is composed of four subunits: alpha, beta, beta', and beta''. When a (nuclear-encoded) sigma factor is associated with the core the holoenzyme is formed, which can initiate transcription. Requires Mg(2+) as cofactor. The cofactor is Zn(2+).

The protein resides in the plastid. The protein localises to the chloroplast. It carries out the reaction RNA(n) + a ribonucleoside 5'-triphosphate = RNA(n+1) + diphosphate. In terms of biological role, DNA-dependent RNA polymerase catalyzes the transcription of DNA into RNA using the four ribonucleoside triphosphates as substrates. The polypeptide is DNA-directed RNA polymerase subunit beta' (Ranunculus macranthus (Large buttercup)).